Consider the following 213-residue polypeptide: ATP synthase peripheral stalk subunit OSCP, mitochondrial (213 aa).

The N-terminal 23 residues, 1–23 (MAALAVSGLSQQVRCFSTSVVRP), are a transit peptide targeting the mitochondrion. The SIFI-degron signature appears at 5 to 23 (AVSGLSQQVRCFSTSVVRP). An N6-acetyllysine mark is found at Lys54, Lys60, Lys70, and Lys73. Lys90 carries the N6-succinyllysine modification. N6-acetyllysine; alternate occurs at positions 100, 158, and 162. An N6-succinyllysine; alternate mark is found at Lys100, Lys158, and Lys162. An N6-acetyllysine mark is found at Lys172, Lys176, and Lys192. Position 199 is an N6-succinyllysine (Lys199).

It belongs to the ATPase delta chain family. As to quaternary structure, component of the ATP synthase complex composed at least of ATP5F1A/subunit alpha, ATP5F1B/subunit beta, ATP5MC1/subunit c (homooctomer), MT-ATP6/subunit a, MT-ATP8/subunit 8, ATP5ME/subunit e, ATP5MF/subunit f, ATP5MG/subunit g, ATP5MK/subunit k, ATP5MJ/subunit j, ATP5F1C/subunit gamma, ATP5F1D/subunit delta, ATP5F1E/subunit epsilon, ATP5PF/subunit F6, ATP5PB/subunit b, ATP5PD/subunit d, ATP5PO/subunit OSCP. ATP synthase complex consists of a soluble F(1) head domain (subunits alpha(3) and beta(3)) - the catalytic core - and a membrane F(0) domain - the membrane proton channel (subunits c, a, 8, e, f, g, k and j). These two domains are linked by a central stalk (subunits gamma, delta, and epsilon) rotating inside the F1 region and a stationary peripheral stalk (subunits F6, b, d, and OSCP). Acetylation at Lys-162 decreases ATP production. Deacetylated by SIRT3. In terms of processing, in response to mitochondrial stress, the precursor protein is ubiquitinated by the SIFI complex in the cytoplasm before mitochondrial import, leading to its degradation. Within the SIFI complex, UBR4 initiates ubiquitin chain that are further elongated or branched by KCMF1.

Its subcellular location is the mitochondrion. The protein resides in the mitochondrion inner membrane. Functionally, subunit OSCP, of the mitochondrial membrane ATP synthase complex (F(1)F(0) ATP synthase or Complex V) that produces ATP from ADP in the presence of a proton gradient across the membrane which is generated by electron transport complexes of the respiratory chain. ATP synthase complex consist of a soluble F(1) head domain - the catalytic core - and a membrane F(1) domain - the membrane proton channel. These two domains are linked by a central stalk rotating inside the F(1) region and a stationary peripheral stalk. During catalysis, ATP synthesis in the catalytic domain of F(1) is coupled via a rotary mechanism of the central stalk subunits to proton translocation. In vivo, can only synthesize ATP although its ATP hydrolase activity can be activated artificially in vitro. Part of the complex F(0) domain. Part of the complex F(0) domain and the peripheric stalk, which acts as a stator to hold the catalytic alpha(3)beta(3) subcomplex and subunit a/ATP6 static relative to the rotary elements. This is ATP synthase peripheral stalk subunit OSCP, mitochondrial from Bos taurus (Bovine).